Here is a 487-residue protein sequence, read N- to C-terminus: Cysteine--tRNA ligase (487 aa).

Cysteine 27 serves as a coordination point for Zn(2+). Residues 29–39 carry the 'HIGH' region motif; sequence ATVQGLPHVGH. Residues 174–194 are disordered; the sequence is IDDMQGAPDADPRGKKDPRDF. A compositionally biased stretch (basic and acidic residues) spans 183–194; the sequence is ADPRGKKDPRDF. Zn(2+)-binding residues include cysteine 225, histidine 250, and glutamate 254. The short motif at 281–285 is the 'KMSKS' region element; it reads KMSKS. Lysine 284 contributes to the ATP binding site.

This sequence belongs to the class-I aminoacyl-tRNA synthetase family. As to quaternary structure, monomer. Zn(2+) is required as a cofactor.

It localises to the cytoplasm. It carries out the reaction tRNA(Cys) + L-cysteine + ATP = L-cysteinyl-tRNA(Cys) + AMP + diphosphate. The chain is Cysteine--tRNA ligase from Arthrobacter sp. (strain FB24).